The chain runs to 171 residues: S-ribosylhomocysteine lyase (171 aa).

Residues H54, H58, and C128 each coordinate Fe cation.

The protein belongs to the LuxS family. In terms of assembly, homodimer. Fe cation serves as cofactor.

It catalyses the reaction S-(5-deoxy-D-ribos-5-yl)-L-homocysteine = (S)-4,5-dihydroxypentane-2,3-dione + L-homocysteine. In terms of biological role, involved in the synthesis of autoinducer 2 (AI-2) which is secreted by bacteria and is used to communicate both the cell density and the metabolic potential of the environment. The regulation of gene expression in response to changes in cell density is called quorum sensing. Catalyzes the transformation of S-ribosylhomocysteine (RHC) to homocysteine (HC) and 4,5-dihydroxy-2,3-pentadione (DPD). The protein is S-ribosylhomocysteine lyase of Pectobacterium atrosepticum (strain SCRI 1043 / ATCC BAA-672) (Erwinia carotovora subsp. atroseptica).